A 152-amino-acid chain; its full sequence is Acidic phospholipase A2 57 (152 aa).

Residues 1 to 21 (MYPAHLLGLLAVCVSLLGAAS) form the signal peptide. The propeptide occupies 22–27 (IPPLPL). 7 disulfide bridges follow: cysteine 38-cysteine 104, cysteine 54-cysteine 151, cysteine 56-cysteine 72, cysteine 71-cysteine 132, cysteine 78-cysteine 125, cysteine 88-cysteine 118, and cysteine 111-cysteine 123. Positions 55, 57, and 59 each coordinate Ca(2+). The active site involves histidine 75. Aspartate 76 lines the Ca(2+) pocket. Aspartate 126 is an active-site residue.

The protein belongs to the phospholipase A2 family. Group I subfamily. D49 sub-subfamily. Requires Ca(2+) as cofactor. Expressed by the venom gland.

It is found in the secreted. It carries out the reaction a 1,2-diacyl-sn-glycero-3-phosphocholine + H2O = a 1-acyl-sn-glycero-3-phosphocholine + a fatty acid + H(+). Its function is as follows. PLA2 catalyzes the calcium-dependent hydrolysis of the 2-acyl groups in 3-sn-phosphoglycerides. The protein is Acidic phospholipase A2 57 of Hydrophis hardwickii (Hardwick's spine-bellied seasnake).